We begin with the raw amino-acid sequence, 127 residues long: Fluoride-specific ion channel FluC (127 aa).

4 helical membrane-spanning segments follow: residues 4–24 (TLLA…QLGV), 35–55 (LGTL…LAFF), 71–91 (TGLC…IMFL), and 103–123 (VLLN…LVTW). 2 residues coordinate Na(+): glycine 75 and threonine 78.

This sequence belongs to the fluoride channel Fluc/FEX (TC 1.A.43) family.

It is found in the cell inner membrane. The catalysed reaction is fluoride(in) = fluoride(out). With respect to regulation, na(+) is not transported, but it plays an essential structural role and its presence is essential for fluoride channel function. Functionally, fluoride-specific ion channel. Important for reducing fluoride concentration in the cell, thus reducing its toxicity. The chain is Fluoride-specific ion channel FluC from Pectobacterium carotovorum subsp. carotovorum (strain PC1).